A 240-amino-acid chain; its full sequence is 2,3,4,5-tetrahydropyridine-2,6-dicarboxylate N-acetyltransferase (240 aa).

This sequence belongs to the transferase hexapeptide repeat family. DapH subfamily.

The enzyme catalyses (S)-2,3,4,5-tetrahydrodipicolinate + acetyl-CoA + H2O = L-2-acetamido-6-oxoheptanedioate + CoA. It participates in amino-acid biosynthesis; L-lysine biosynthesis via DAP pathway; LL-2,6-diaminopimelate from (S)-tetrahydrodipicolinate (acetylase route): step 1/3. In terms of biological role, catalyzes the transfer of an acetyl group from acetyl-CoA to tetrahydrodipicolinate. In Bacillus thuringiensis (strain Al Hakam), this protein is 2,3,4,5-tetrahydropyridine-2,6-dicarboxylate N-acetyltransferase.